A 357-amino-acid chain; its full sequence is tRNA pseudouridine synthase D (357 aa).

Residue D76 is the Nucleophile of the active site. Residues 151–331 enclose the TRUD domain; sequence GMPNYFGYQR…DGRYKDEEAQ (181 aa).

It belongs to the pseudouridine synthase TruD family.

It catalyses the reaction uridine(13) in tRNA = pseudouridine(13) in tRNA. Functionally, responsible for synthesis of pseudouridine from uracil-13 in transfer RNAs. This is tRNA pseudouridine synthase D from Sulfurimonas denitrificans (strain ATCC 33889 / DSM 1251) (Thiomicrospira denitrificans (strain ATCC 33889 / DSM 1251)).